We begin with the raw amino-acid sequence, 419 residues long: E3 ubiquitin-protein ligase RNF130 (419 aa).

Positions 1-27 (MSGAARAGPARLAALALLTCSLWPTRA) are cleaved as a signal peptide. At 28–194 (DNASQEYYTA…MPPKNFSRGS (167 aa)) the chain is on the extracellular side. N-linked (GlcNAc...) asparagine glycans are attached at residues Asn29, Asn40, Asn112, Asn135, Asn172, and Asn189. A PA domain is found at 105-176 (IALLQRGNCT…SYLEKNISVQ (72 aa)). Residues 195-217 (LVFVSISFIVLMIISSAWLIFYF) form a helical membrane-spanning segment. The Cytoplasmic segment spans residues 218–419 (IQKIRYTNAR…SLNANEVEWF (202 aa)). An RING-type zinc finger spans residues 264 to 305 (CAVCIESYKQNDVVRVLPCKHVFHKSCVDPWLSEHCTCPMCK).

As to expression, expression is highest in liver, with lesser amounts in the lung, spleen, brain, heart, kidney and testis.

Its subcellular location is the membrane. It is found in the cytoplasm. It catalyses the reaction S-ubiquitinyl-[E2 ubiquitin-conjugating enzyme]-L-cysteine + [acceptor protein]-L-lysine = [E2 ubiquitin-conjugating enzyme]-L-cysteine + N(6)-ubiquitinyl-[acceptor protein]-L-lysine.. It functions in the pathway protein modification; protein ubiquitination. Functionally, acts as an E3 ubiquitin-protein ligase. May have a role during the programmed cell death of hematopoietic cells. This chain is E3 ubiquitin-protein ligase RNF130, found in Mus musculus (Mouse).